The primary structure comprises 90 residues: Small ribosomal subunit protein uS17 (90 aa).

The protein belongs to the universal ribosomal protein uS17 family. In terms of assembly, part of the 30S ribosomal subunit.

One of the primary rRNA binding proteins, it binds specifically to the 5'-end of 16S ribosomal RNA. The chain is Small ribosomal subunit protein uS17 from Cutibacterium acnes (strain DSM 16379 / KPA171202) (Propionibacterium acnes).